The following is a 184-amino-acid chain: MNFMLLSAALASMAVAGPIAGTYPITYPSSNTPATYPSGNAPIWSSPIHGGNNGGNGGNGGDNNGGNGGNGGSGGGNTGGNAGNGGGNNGGNNNGGNNGGNTGGEGGNGGNGGNGGAPVELCPANRVPQCCQLSVLGVADVTCASPSSGLTSVSAFEADCANDGTTAQCCLIPVLGLGLFCSNP.

Positions 1–16 are cleaved as a signal peptide; sequence MNFMLLSAALASMAVA. 4 disulfide bridges follow: C122-C169, C130-C160, C131-C143, and C170-C181.

Belongs to the cerato-ulmin hydrophobin family. Homotetramer. Further self-assembles to form highly ordered films at water-air interfaces through intermolecular interactions. As to expression, expressed in the mycellium.

It localises to the secreted. Functionally, aerial growth, conidiation, and dispersal of filamentous fungi in the environment rely upon a capability of their secreting small amphipathic proteins called hydrophobins (HPBs) with low sequence identity. Class I can self-assemble into an outermost layer of rodlet bundles on aerial cell surfaces, conferring cellular hydrophobicity that supports fungal growth, development and dispersal; whereas Class II form highly ordered films at water-air interfaces through intermolecular interactions but contribute nothing to the rodlet structure. Hcf-6 is a class II hydrophobin that is involved in adhesion and in tomato plants infection. Is secreted to form a coat both around and beneath the fungus. The polypeptide is Class II hydrophobin 6 (Passalora fulva (Tomato leaf mold)).